We begin with the raw amino-acid sequence, 208 residues long: FMN-dependent NADH:quinone oxidoreductase (208 aa).

FMN contacts are provided by residues 17-19 (SNS), 99-102 (MWNL), and 143-146 (SRGG).

The protein belongs to the azoreductase type 1 family. As to quaternary structure, homodimer. Requires FMN as cofactor.

It carries out the reaction 2 a quinone + NADH + H(+) = 2 a 1,4-benzosemiquinone + NAD(+). It catalyses the reaction N,N-dimethyl-1,4-phenylenediamine + anthranilate + 2 NAD(+) = 2-(4-dimethylaminophenyl)diazenylbenzoate + 2 NADH + 2 H(+). Functionally, quinone reductase that provides resistance to thiol-specific stress caused by electrophilic quinones. In terms of biological role, also exhibits azoreductase activity. Catalyzes the reductive cleavage of the azo bond in aromatic azo compounds to the corresponding amines. This is FMN-dependent NADH:quinone oxidoreductase from Staphylococcus aureus (strain COL).